Here is a 438-residue protein sequence, read N- to C-terminus: Serine--tRNA ligase (438 aa).

An L-serine-binding site is contributed by 243–245 (TAE). 274 to 276 (RSE) is a binding site for ATP. Glu297 is an L-serine binding site. 361-364 (EISS) contacts ATP. Residue Ser396 participates in L-serine binding.

It belongs to the class-II aminoacyl-tRNA synthetase family. Type-1 seryl-tRNA synthetase subfamily. In terms of assembly, homodimer. The tRNA molecule binds across the dimer.

The protein resides in the cytoplasm. It carries out the reaction tRNA(Ser) + L-serine + ATP = L-seryl-tRNA(Ser) + AMP + diphosphate + H(+). The enzyme catalyses tRNA(Sec) + L-serine + ATP = L-seryl-tRNA(Sec) + AMP + diphosphate + H(+). Its pathway is aminoacyl-tRNA biosynthesis; selenocysteinyl-tRNA(Sec) biosynthesis; L-seryl-tRNA(Sec) from L-serine and tRNA(Sec): step 1/1. Catalyzes the attachment of serine to tRNA(Ser). Is also able to aminoacylate tRNA(Sec) with serine, to form the misacylated tRNA L-seryl-tRNA(Sec), which will be further converted into selenocysteinyl-tRNA(Sec). This Ralstonia pickettii (strain 12J) protein is Serine--tRNA ligase.